Reading from the N-terminus, the 567-residue chain is Urease subunit alpha (567 aa).

Residues 129–567 (GGIDAHIHFI…LPLAQLYCLF (439 aa)) form the Urease domain. Ni(2+) is bound by residues His-134, His-136, and Lys-217. N6-carboxylysine is present on Lys-217. His-219 contributes to the substrate binding site. Positions 246 and 272 each coordinate Ni(2+). His-320 serves as the catalytic Proton donor. Position 360 (Asp-360) interacts with Ni(2+).

This sequence belongs to the metallo-dependent hydrolases superfamily. Urease alpha subunit family. Heterotrimer of UreA (gamma), UreB (beta) and UreC (alpha) subunits. Three heterotrimers associate to form the active enzyme. It depends on Ni cation as a cofactor. Carboxylation allows a single lysine to coordinate two nickel ions.

It localises to the cytoplasm. The catalysed reaction is urea + 2 H2O + H(+) = hydrogencarbonate + 2 NH4(+). It participates in nitrogen metabolism; urea degradation; CO(2) and NH(3) from urea (urease route): step 1/1. In Alteromonas mediterranea (strain DSM 17117 / CIP 110805 / LMG 28347 / Deep ecotype), this protein is Urease subunit alpha.